Here is a 510-residue protein sequence, read N- to C-terminus: Sucrose transport protein SUC4 (510 aa).

The interval 1–34 is disordered; that stretch reads MATSDQDRRHRVTRNRPPIARPSTSSSRPVVSPP. Over 1 to 45 the chain is Cytoplasmic; the sequence is MATSDQDRRHRVTRNRPPIARPSTSSSRPVVSPPRSKVSKRVLLR. Over residues 21 to 34 the composition is skewed to low complexity; that stretch reads RPSTSSSRPVVSPP. Ser23 carries the phosphoserine modification. Residues 46 to 66 traverse the membrane as a helical segment; the sequence is VASVACGIQFGWALQLSLLTP. At 67 to 71 the chain is on the extracellular side; it reads YVQEL. A helical transmembrane segment spans residues 72-92; the sequence is GIPHAWASVIWLCGPLSGLFV. Topologically, residues 93–111 are cytoplasmic; it reads QPLVGHSSDRCTSKYGRRR. Residues 112–132 form a helical membrane-spanning segment; sequence PFIVAGAVAISISVMVIGHAA. The Extracellular segment spans residues 133-148; the sequence is DIGWAFGDREGKIKPR. A helical membrane pass occupies residues 149–169; sequence AIVAFVLGFWILDVANNMTQG. Residues 170–187 lie on the Cytoplasmic side of the membrane; it reads PCRALLADLTENDNRRTR. A helical membrane pass occupies residues 188–208; it reads VANGYFSLFMAVGNVLGYATG. Residues 209 to 233 are Extracellular-facing; the sequence is SYNGWYKIFTFTKTVACNVECANLK. The chain crosses the membrane as a helical span at residues 234 to 254; that stretch reads SAFYIDVVFIAITTILSVSAA. At 255 to 291 the chain is on the cytoplasmic side; it reads HEVPLASLASEAHGQTSGTDEAFLSEIFGTFRYFPGN. The helical transmembrane segment at 292 to 312 threads the bilayer; that stretch reads VWIILLVTALTWIGWFPFILF. Topologically, residues 313 to 335 are extracellular; the sequence is DTDWMGREIYGGEPNIGTSYSAG. Residues 336 to 356 traverse the membrane as a helical segment; sequence VSMGALGLMLNSVFLGITSVL. Over 357 to 365 the chain is Cytoplasmic; it reads MEKLCRKWG. Residues 366 to 386 form a helical membrane-spanning segment; the sequence is AGFVWGISNILMAICFLGMII. Topologically, residues 387–402 are extracellular; the sequence is TSFVASHLGYIGHEQP. Residues 403 to 423 traverse the membrane as a helical segment; that stretch reads PASIVFAAVLIFTILGIPLAI. The Cytoplasmic portion of the chain corresponds to 424 to 443; sequence TYSVPYALISIRIESLGLGQ. The helical transmembrane segment at 444–464 threads the bilayer; the sequence is GLSLGVLNLAIVIPQVIVSVG. The Extracellular portion of the chain corresponds to 465-477; sequence SGPWDQLFGGGNS. The chain crosses the membrane as a helical span at residues 478-498; sequence PALAVGAATGFIGGIVAILAL. Over 499 to 510 the chain is Cytoplasmic; the sequence is PRTRIQKPIPLP.

It belongs to the glycoside-pentoside-hexuronide (GPH) cation symporter transporter (TC 2.A.2.4) family. Homodimer. Interacts with SUC2 and SUC3. As to expression, expressed in sink tissues, mostly in minor veins of sink leaves. Localized in companion cells.

It localises to the cell membrane. It catalyses the reaction sucrose(out) + H(+)(out) = sucrose(in) + H(+)(in). The protein operates within glycan biosynthesis; sucrose metabolism. Responsible for the transport of sucrose into the cell, with the concomitant uptake of protons (symport system). Can also transport maltose at a lesser rate. May also transport biotin. The sequence is that of Sucrose transport protein SUC4 from Arabidopsis thaliana (Mouse-ear cress).